The chain runs to 118 residues: MTAFRLVAVALVVVVACSTTWARSLEGSSSPVASLIRGRSLSKRANFDPSCAGVYNRELLGRLSRLCDDCYNVFREPKVATECRSNCFYNPVFVQCLEYLIPADLHEEYQAHVQTVGK.

Residues 1-22 (MTAFRLVAVALVVVVACSTTWA) form the signal peptide. 3 cysteine pairs are disulfide-bonded: C51-C87, C67-C83, and C70-C96. Residue V116 is modified to Valine amide.

Belongs to the arthropod CHH/MIH/GIH/VIH hormone family.

The protein resides in the secreted. Hormone found in the sinus gland of isopods and decapods which controls the blood sugar level. Has a secretagogue action over the amylase released from the midgut gland. May act as a stress hormone and may be involved in the control of molting and reproduction. This chain is Crustacean hyperglycemic hormones 2 (CHH2), found in Penaeus monodon (Giant tiger prawn).